A 231-amino-acid chain; its full sequence is MKLKTLAKATLALGLLTTGVITSEGQAVQAKEKQERVQHLYDIKDLHRYYSSESFEFSNISGKVENYNGSNVVRFNQENQNHQLFLLGKDKEKYKEGIEGKDVFVVKELIDPNGRLSTVGGVTKKNNKSSETNTHLFVNKVYGGNLDASIDSFSINKEEVSLKELDFKIRQHLVKNYGLYKGTTKYGKITINLKDGEKQEIDLGDKLQFERMGDVLNSKDINKIEVTLKQI.

An N-terminal signal peptide occupies residues 1–30 (MKLKTLAKATLALGLLTTGVITSEGQAVQA).

It belongs to the staphylococcal/streptococcal toxin family. Interacts with host IgA and complement C5; these interactions inhibits complement activation.

Its subcellular location is the secreted. In terms of biological role, plays a role in the inhibition of host complement-mediated lysis and serum bactericidal activity by interacting with complement component C5. Affects all three pathways of complement activation and inhibits the cleavage of C5 by preventing its binding to C5 convertases. In turn, prevents C5a-mediated neutrophil migration. The polypeptide is Staphylococcal superantigen-like 7 (Staphylococcus aureus (strain NCTC 8325 / PS 47)).